We begin with the raw amino-acid sequence, 198 residues long: Recombination protein RecR (198 aa).

The C4-type zinc finger occupies 56 to 71; the sequence is CEICGNVSEQATCSIC. The Toprim domain occupies 79-174; sequence ALICVVEEAK…RVTRLASGLP (96 aa).

This sequence belongs to the RecR family.

In terms of biological role, may play a role in DNA repair. It seems to be involved in an RecBC-independent recombinational process of DNA repair. It may act with RecF and RecO. The polypeptide is Recombination protein RecR (Leifsonia xyli subsp. xyli (strain CTCB07)).